The primary structure comprises 636 residues: Threonine--tRNA ligase (636 aa).

One can recognise a TGS domain in the interval 1–61 (MLKITLKDGS…NENCEVEILS (61 aa)). A catalytic region spans residues 244–534 (EHRKLGKELD…LIEHYEGKFP (291 aa)). Cys-335, His-386, and His-511 together coordinate Zn(2+).

Belongs to the class-II aminoacyl-tRNA synthetase family. In terms of assembly, homodimer. Requires Zn(2+) as cofactor.

It is found in the cytoplasm. It carries out the reaction tRNA(Thr) + L-threonine + ATP = L-threonyl-tRNA(Thr) + AMP + diphosphate + H(+). In terms of biological role, catalyzes the attachment of threonine to tRNA(Thr) in a two-step reaction: L-threonine is first activated by ATP to form Thr-AMP and then transferred to the acceptor end of tRNA(Thr). Also edits incorrectly charged L-seryl-tRNA(Thr). The polypeptide is Threonine--tRNA ligase (Natranaerobius thermophilus (strain ATCC BAA-1301 / DSM 18059 / JW/NM-WN-LF)).